The primary structure comprises 444 residues: Glutamyl-tRNA(Gln) amidotransferase subunit D (444 aa).

The 333-residue stretch at 92 to 424 (SEIKIISTGG…EKIQNLMITN (333 aa)) folds into the Asparaginase/glutaminase domain. Residues Thr-102, Thr-178, Asp-179, and Lys-257 contribute to the active site.

The protein belongs to the asparaginase 1 family. GatD subfamily. Heterodimer of GatD and GatE.

It catalyses the reaction L-glutamyl-tRNA(Gln) + L-glutamine + ATP + H2O = L-glutaminyl-tRNA(Gln) + L-glutamate + ADP + phosphate + H(+). Allows the formation of correctly charged Gln-tRNA(Gln) through the transamidation of misacylated Glu-tRNA(Gln) in organisms which lack glutaminyl-tRNA synthetase. The reaction takes place in the presence of glutamine and ATP through an activated gamma-phospho-Glu-tRNA(Gln). The GatDE system is specific for glutamate and does not act on aspartate. This is Glutamyl-tRNA(Gln) amidotransferase subunit D from Saccharolobus solfataricus (strain ATCC 35092 / DSM 1617 / JCM 11322 / P2) (Sulfolobus solfataricus).